The following is a 660-amino-acid chain: Arginine--tRNA ligase, cytoplasmic (660 aa).

Met1 bears the N-acetylmethionine mark. A could be involved in the assembly of the multisynthetase complex region spans residues Met1–Asn72. Residues Ser200–Asn202, His211, Tyr384, Asp388, and Gln412 contribute to the L-arginine site. A 'HIGH' region motif is present at residues Pro201–Leu212. The interaction with tRNA stretch occupies residues Asn529–Ser543.

This sequence belongs to the class-I aminoacyl-tRNA synthetase family. In terms of assembly, interacts (via N-terminus) with AIMP1 (via N-terminus); this stimulates its catalytic activity. Interacts (via N-terminus) with LARS2 (via C-terminus). Monomer. Part of a multisubunit complex that groups tRNA ligases for Arg (RARS1), Asp (DARS1), Gln (QARS1), Ile (IARS1), Leu (LARS1), Lys (KARS1), Met (MARS1) the bifunctional ligase for Glu and Pro (EPRS1) and the auxiliary subunits AIMP1/p43, AIMP2/p38 and EEF1E1/p18. Interacts with QARS1. Part of a complex composed of RARS1, QARS1 and AIMP1.

The protein resides in the cytoplasm. It localises to the cytosol. The enzyme catalyses tRNA(Arg) + L-arginine + ATP = L-arginyl-tRNA(Arg) + AMP + diphosphate. Its function is as follows. Forms part of a macromolecular complex that catalyzes the attachment of specific amino acids to cognate tRNAs during protein synthesis. Modulates the secretion of AIMP1 and may be involved in generation of the inflammatory cytokine EMAP2 from AIMP1. The protein is Arginine--tRNA ligase, cytoplasmic (Rars1) of Mus musculus (Mouse).